A 351-amino-acid polypeptide reads, in one-letter code: Cytoplasmic dynein 2 light intermediate chain 1 (351 aa).

The segment at 303-335 is disordered; the sequence is GTLKAVQDPARDPQYAESEVDEMRVQKDQELEH. Residues 323 to 335 are compositionally biased toward basic and acidic residues; sequence DEMRVQKDQELEH.

The protein belongs to the dynein light intermediate chain family. As to quaternary structure, light intermediate chain of the cytoplasmic dynein complex 2, a multisubunit complex composed at least of eleven different proteins. The cytoplasmic dynein 2 complex consists of two catalytic heavy chains (HCs) and a number of non-catalytic subunits presented by intermediate chains (ICs), light intermediate chains (LICs) and light chains (LCs). Among them, a heavy chain (DYNC2H1), two intermediate chains (DYNC2I2 and DYNC2I1), a light intermediate chain (DYNC2LI1), and a light chain (DYNLT2B) are unique to the dynein-2 complex, but a subset of light chains are also shared by dynein-1 and dynein-2 complexes. Dynein-2 complex is built around two copies of cytoplasmic dynein 2 heavy chain 1 (DYNC2H1). The C-terminal region forms the motor domain, which converts the energy from ATP hydrolysis into movement. Its N-terminal region forms the tail, an extended structure that binds the other subunits and holds the two heavy chains in a homodimer. Interacts with DYNC2H1 (via N-terminus); this interaction stabilizes the dynein-2 complex structure. In terms of tissue distribution, specifically expressed by ciliated cells in brain, lung, spleen, testis and kidney (at protein level). Enriched in the ependymal layer lining the lateral ventricles (at protein level).

The protein resides in the cytoplasm. It is found in the cell projection. It localises to the cilium. Its subcellular location is the cytoskeleton. The protein localises to the cilium basal body. The protein resides in the cilium axoneme. It is found in the microtubule organizing center. It localises to the centrosome. Acts as one of several non-catalytic accessory components of the cytoplasmic dynein 2 complex (dynein-2 complex), a motor protein complex that drives the movement of cargos along microtubules within cilia and flagella in concert with the intraflagellar transport (IFT) system, facilitating the assembly of these organelles. Involved in the regulation of ciliary length. This chain is Cytoplasmic dynein 2 light intermediate chain 1 (Dync2li1), found in Mus musculus (Mouse).